The sequence spans 356 residues: MRVADFSFELPESLIAHYPQPERSGCRLLSLDGPTGALTHGTFTDLLDKLNPGDLLVFNNTRVIPARLFGRKASGGKIEVLVERMLDDKRILAHIRASKAPKPGAELLLGDDESINATMVARHDALFEVEFNDARPVLDILNAIGHMPLPPYIDRPDEDADRELYQTVYSQKPGAVAAPTAGLHFDEPLLERLREKGIEMAFVTLHVGAGTFQPVRVDTIEDHIMHSEYAEVPQDVVDAVLAAKARGNRVIAVGTTSVRSLESAAQAAKKDLIEPFFGDTKIFIYPGYQYTVIDALVTNFHLPESTLIMLVSAFAGYQNTMNAYKAAVEQNYRFFSYGDAMFITYNPQALNERVGE.

Belongs to the QueA family. In terms of assembly, monomer.

It localises to the cytoplasm. It catalyses the reaction 7-aminomethyl-7-carbaguanosine(34) in tRNA + S-adenosyl-L-methionine = epoxyqueuosine(34) in tRNA + adenine + L-methionine + 2 H(+). The protein operates within tRNA modification; tRNA-queuosine biosynthesis. Its function is as follows. Transfers and isomerizes the ribose moiety from AdoMet to the 7-aminomethyl group of 7-deazaguanine (preQ1-tRNA) to give epoxyqueuosine (oQ-tRNA). In Enterobacter sp. (strain 638), this protein is S-adenosylmethionine:tRNA ribosyltransferase-isomerase.